Here is a 107-residue protein sequence, read N- to C-terminus: Iron-binding protein IscA (107 aa).

The Fe cation site is built by Cys-35, Cys-99, and Cys-101.

The protein belongs to the HesB/IscA family. Homodimer; may form tetramers and higher multimers. The cofactor is Fe cation.

Functionally, is able to transfer iron-sulfur clusters to apo-ferredoxin. Multiple cycles of [2Fe2S] cluster formation and transfer are observed, suggesting that IscA acts catalytically. Recruits intracellular free iron so as to provide iron for the assembly of transient iron-sulfur cluster in IscU in the presence of IscS, L-cysteine and the thioredoxin reductase system TrxA/TrxB. The protein is Iron-binding protein IscA of Proteus mirabilis (strain HI4320).